The following is a 292-amino-acid chain: uncharacterized protein (292 aa).

The helical transmembrane segment at 13–35 (LFILFIIVVCIYLLPRVAINAFY) threads the bilayer.

The protein belongs to the serine esterase family.

Its subcellular location is the membrane. This is an uncharacterized protein from Salmonella typhimurium (strain LT2 / SGSC1412 / ATCC 700720).